The chain runs to 284 residues: Bifunctional protein FolD (284 aa).

Residues 165-167, Ser-190, and Val-231 contribute to the NADP(+) site; that span reads GRS.

The protein belongs to the tetrahydrofolate dehydrogenase/cyclohydrolase family. Homodimer.

It catalyses the reaction (6R)-5,10-methylene-5,6,7,8-tetrahydrofolate + NADP(+) = (6R)-5,10-methenyltetrahydrofolate + NADPH. The enzyme catalyses (6R)-5,10-methenyltetrahydrofolate + H2O = (6R)-10-formyltetrahydrofolate + H(+). The protein operates within one-carbon metabolism; tetrahydrofolate interconversion. Catalyzes the oxidation of 5,10-methylenetetrahydrofolate to 5,10-methenyltetrahydrofolate and then the hydrolysis of 5,10-methenyltetrahydrofolate to 10-formyltetrahydrofolate. This chain is Bifunctional protein FolD, found in Geobacillus kaustophilus (strain HTA426).